The sequence spans 290 residues: 4-diphosphocytidyl-2-C-methyl-D-erythritol kinase (290 aa).

Residue lysine 12 is part of the active site. Residue 97-107 (PVASGIGGGSA) coordinates ATP. Aspartate 139 is a catalytic residue.

Belongs to the GHMP kinase family. IspE subfamily.

It carries out the reaction 4-CDP-2-C-methyl-D-erythritol + ATP = 4-CDP-2-C-methyl-D-erythritol 2-phosphate + ADP + H(+). Its pathway is isoprenoid biosynthesis; isopentenyl diphosphate biosynthesis via DXP pathway; isopentenyl diphosphate from 1-deoxy-D-xylulose 5-phosphate: step 3/6. Catalyzes the phosphorylation of the position 2 hydroxy group of 4-diphosphocytidyl-2C-methyl-D-erythritol. This is 4-diphosphocytidyl-2-C-methyl-D-erythritol kinase from Parvibaculum lavamentivorans (strain DS-1 / DSM 13023 / NCIMB 13966).